Consider the following 332-residue polypeptide: HTH-type transcriptional regulator IdnR (332 aa).

The HTH lacI-type domain occupies Ile6–Asn60. The H-T-H motif DNA-binding region spans Leu8–Arg27.

In terms of biological role, idn operon regulator. May repress gntKU and gntT genes when growing on L-idonate. The chain is HTH-type transcriptional regulator IdnR (idnR) from Escherichia coli (strain K12).